The chain runs to 293 residues: MAPSQLPPIFNPTPQDIEMLLAAQCHLGSKNLQVHMEPYLWKTRPDGVNVINVGKTWEKILLAARIIAAIDNPADICVISARPYGQRAVLKFASHTGATAIAGRFTPGNFTNYITRSFKEPRLIVVTDPRTDAQAIKEASYVNIPVIALCDTDSPTDFVDVAIPTNNKGRHAIGLIWWLLAREVLRLRGTLANREVDWDVVVDLYFYRDPEAEENKEVAEEKVASAEDVGAGAIESGFAAESWDAQGAAAPAAFAAAGATSWEADGGDWAASSAPAPGGENWAEAQPAEGAKW.

The tract at residues 265–293 (DGGDWAASSAPAPGGENWAEAQPAEGAKW) is disordered.

Belongs to the universal ribosomal protein uS2 family. Component of the small ribosomal subunit. Mature ribosomes consist of a small (40S) and a large (60S) subunit. The 40S subunit contains about 33 different proteins and 1 molecule of RNA (18S). The 60S subunit contains about 49 different proteins and 3 molecules of RNA (25S, 5.8S and 5S). Interacts with rps21.

The protein localises to the cytoplasm. Functionally, required for the assembly and/or stability of the 40S ribosomal subunit. Required for the processing of the 20S rRNA-precursor to mature 18S rRNA in a late step of the maturation of 40S ribosomal subunits. The protein is Small ribosomal subunit protein uS2 (rps0) of Emericella nidulans (strain FGSC A4 / ATCC 38163 / CBS 112.46 / NRRL 194 / M139) (Aspergillus nidulans).